Consider the following 378-residue polypeptide: Valine--tRNA ligase (378 aa).

Positions 307–377 (AGFINKEAEL…IQEQYKAIEA (71 aa)) form a coiled coil.

Belongs to the class-I aminoacyl-tRNA synthetase family. ValS type 1 subfamily. In terms of assembly, monomer.

The protein resides in the cytoplasm. The enzyme catalyses tRNA(Val) + L-valine + ATP = L-valyl-tRNA(Val) + AMP + diphosphate. Functionally, catalyzes the attachment of valine to tRNA(Val). As ValRS can inadvertently accommodate and process structurally similar amino acids such as threonine, to avoid such errors, it has a 'posttransfer' editing activity that hydrolyzes mischarged Thr-tRNA(Val) in a tRNA-dependent manner. The sequence is that of Valine--tRNA ligase (valS) from Haemophilus parainfluenzae.